Consider the following 154-residue polypeptide: Lipoprotein signal peptidase (154 aa).

2 consecutive transmembrane segments (helical) span residues 55–75 (GHMWFFYLITVIVIGIIIYIM) and 84–104 (LFSISLAFILGGAIGNFIDRI). Catalysis depends on residues aspartate 111 and aspartate 129. The chain crosses the membrane as a helical span at residues 124 to 144 (IFNVADAALSVGVVLMLVYVF).

Belongs to the peptidase A8 family.

It localises to the cell membrane. It catalyses the reaction Release of signal peptides from bacterial membrane prolipoproteins. Hydrolyzes -Xaa-Yaa-Zaa-|-(S,diacylglyceryl)Cys-, in which Xaa is hydrophobic (preferably Leu), and Yaa (Ala or Ser) and Zaa (Gly or Ala) have small, neutral side chains.. Its pathway is protein modification; lipoprotein biosynthesis (signal peptide cleavage). Its function is as follows. This protein specifically catalyzes the removal of signal peptides from prolipoproteins. The chain is Lipoprotein signal peptidase from Listeria innocua serovar 6a (strain ATCC BAA-680 / CLIP 11262).